A 296-amino-acid chain; its full sequence is GTP cyclohydrolase FolE2 (296 aa).

The protein belongs to the GTP cyclohydrolase IV family.

It carries out the reaction GTP + H2O = 7,8-dihydroneopterin 3'-triphosphate + formate + H(+). It participates in cofactor biosynthesis; 7,8-dihydroneopterin triphosphate biosynthesis; 7,8-dihydroneopterin triphosphate from GTP: step 1/1. Functionally, converts GTP to 7,8-dihydroneopterin triphosphate. This chain is GTP cyclohydrolase FolE2, found in Delftia acidovorans (strain DSM 14801 / SPH-1).